Reading from the N-terminus, the 864-residue chain is Structure-specific endonuclease subunit SLX4 (864 aa).

Positions 35–54 are enriched in low complexity; that stretch reads SPLSLPSPTSLLDFLSTSTS. Disordered regions lie at residues 35–72, 89–113, 160–193, 288–318, 348–382, 413–432, and 625–771; these read SPLSLPSPTSLLDFLSTSTSRGPARSDTDGDKTQGKEV, VVSGTGGKAATGKKLKRRTESPGNA, KANQTVSLQPETKKSAPKGCNDTTQPAENGHIND, GLSDSRQSSITEDSESATSKPRRVKAKNPPK, LSDEPGKEKNVAKRTSGARYAKPGRKKSATTEKKN, ANGHSEDQHEQNEGTSHISN, and KTSN…ETLP. Residues 58-72 show a composition bias toward basic and acidic residues; it reads ARSDTDGDKTQGKEV. Composition is skewed to polar residues over residues 160–169 and 289–306; these read KANQTVSLQP and LSDSRQSSITEDSESATS. Residues 307–317 are compositionally biased toward basic residues; that stretch reads KPRRVKAKNPP. Residues 659–668 are compositionally biased toward polar residues; it reads SIPQTATTQV. Residues 683–695 are compositionally biased toward low complexity; that stretch reads VPVPSRRSTSTSK. Over residues 743 to 771 the composition is skewed to polar residues; it reads PESFNLPTTPLTIRSGKIPSTGTASETLP.

This sequence belongs to the SLX4 family. In terms of assembly, forms a heterodimer with SLX1. Phosphorylated in response to DNA damage.

It localises to the nucleus. Its function is as follows. Regulatory subunit of the SLX1-SLX4 structure-specific endonuclease that resolves DNA secondary structures generated during DNA repair and recombination. Has endonuclease activity towards branched DNA substrates, introducing single-strand cuts in duplex DNA close to junctions with ss-DNA. The polypeptide is Structure-specific endonuclease subunit SLX4 (Paracoccidioides brasiliensis (strain Pb03)).